Consider the following 255-residue polypeptide: 5-oxoprolinase subunit A (255 aa).

The protein belongs to the LamB/PxpA family. As to quaternary structure, forms a complex composed of PxpA, PxpB and PxpC.

It catalyses the reaction 5-oxo-L-proline + ATP + 2 H2O = L-glutamate + ADP + phosphate + H(+). Catalyzes the cleavage of 5-oxoproline to form L-glutamate coupled to the hydrolysis of ATP to ADP and inorganic phosphate. The sequence is that of 5-oxoprolinase subunit A from Campylobacter jejuni subsp. jejuni serotype O:6 (strain 81116 / NCTC 11828).